The primary structure comprises 100 residues: Urease subunit gamma (100 aa).

Belongs to the urease gamma subunit family. Heterotrimer of UreA (gamma), UreB (beta) and UreC (alpha) subunits. Three heterotrimers associate to form the active enzyme.

It is found in the cytoplasm. It carries out the reaction urea + 2 H2O + H(+) = hydrogencarbonate + 2 NH4(+). It participates in nitrogen metabolism; urea degradation; CO(2) and NH(3) from urea (urease route): step 1/1. This Micrococcus luteus (strain ATCC 4698 / DSM 20030 / JCM 1464 / CCM 169 / CCUG 5858 / IAM 1056 / NBRC 3333 / NCIMB 9278 / NCTC 2665 / VKM Ac-2230) (Micrococcus lysodeikticus) protein is Urease subunit gamma.